The primary structure comprises 233 residues: Snake venom serine protease BthaTL (233 aa).

Residues 1–224 enclose the Peptidase S1 domain; the sequence is VIGGDECDIN…YLPWIQSIIA (224 aa). 6 disulfides stabilise this stretch: Cys7–Cys138, Cys25–Cys41, Cys73–Cys231, Cys117–Cys185, Cys149–Cys164, and Cys175–Cys200. Residues His40 and Asp85 each act as charge relay system in the active site. The active-site Charge relay system is Ser179.

The protein belongs to the peptidase S1 family. Snake venom subfamily. In terms of assembly, monomer. In terms of tissue distribution, expressed by the venom gland.

The protein resides in the secreted. In terms of biological role, snake venom serine protease that may act in the hemostasis system of the prey. This chain is Snake venom serine protease BthaTL, found in Bothrops alternatus (Urutu).